We begin with the raw amino-acid sequence, 146 residues long: Transcriptional regulator MraZ (146 aa).

SpoVT-AbrB domains are found at residues 5-51 (NHPT…PLQE) and 80-123 (GQMV…NHEA).

This sequence belongs to the MraZ family. Forms oligomers.

It localises to the cytoplasm. The protein resides in the nucleoid. This Acidobacterium capsulatum (strain ATCC 51196 / DSM 11244 / BCRC 80197 / JCM 7670 / NBRC 15755 / NCIMB 13165 / 161) protein is Transcriptional regulator MraZ.